The sequence spans 183 residues: Crossover junction endodeoxyribonuclease RuvC (183 aa).

Catalysis depends on residues Asp-16, Glu-75, and Asp-147. Residues Asp-16, Glu-75, and Asp-147 each contribute to the Mg(2+) site.

Belongs to the RuvC family. As to quaternary structure, homodimer which binds Holliday junction (HJ) DNA. The HJ becomes 2-fold symmetrical on binding to RuvC with unstacked arms; it has a different conformation from HJ DNA in complex with RuvA. In the full resolvosome a probable DNA-RuvA(4)-RuvB(12)-RuvC(2) complex forms which resolves the HJ. Mg(2+) serves as cofactor.

Its subcellular location is the cytoplasm. The catalysed reaction is Endonucleolytic cleavage at a junction such as a reciprocal single-stranded crossover between two homologous DNA duplexes (Holliday junction).. In terms of biological role, the RuvA-RuvB-RuvC complex processes Holliday junction (HJ) DNA during genetic recombination and DNA repair. Endonuclease that resolves HJ intermediates. Cleaves cruciform DNA by making single-stranded nicks across the HJ at symmetrical positions within the homologous arms, yielding a 5'-phosphate and a 3'-hydroxyl group; requires a central core of homology in the junction. The consensus cleavage sequence is 5'-(A/T)TT(C/G)-3'. Cleavage occurs on the 3'-side of the TT dinucleotide at the point of strand exchange. HJ branch migration catalyzed by RuvA-RuvB allows RuvC to scan DNA until it finds its consensus sequence, where it cleaves and resolves the cruciform DNA. The polypeptide is Crossover junction endodeoxyribonuclease RuvC (Azoarcus sp. (strain BH72)).